Consider the following 252-residue polypeptide: 5-oxoprolinase subunit A (252 aa).

This sequence belongs to the LamB/PxpA family. Forms a complex composed of PxpA, PxpB and PxpC.

It carries out the reaction 5-oxo-L-proline + ATP + 2 H2O = L-glutamate + ADP + phosphate + H(+). Its function is as follows. Catalyzes the cleavage of 5-oxoproline to form L-glutamate coupled to the hydrolysis of ATP to ADP and inorganic phosphate. This chain is 5-oxoprolinase subunit A, found in Corynebacterium glutamicum (strain R).